The chain runs to 367 residues: Probable neutral protease 2 homolog MCYG_00239 (367 aa).

A signal peptide spans 1 to 19 (MQVLVALAALSSLAAPVVG). A propeptide spanning residues 20–190 (FSIPRGVPVS…DGPFTRIDKR (171 aa)) is cleaved from the precursor. 3 disulfides stabilise this stretch: C198-C268, C275-C293, and C307-C367. Residue H318 coordinates Zn(2+). E319 is an active-site residue. Zn(2+)-binding residues include H322 and D333.

Belongs to the peptidase M35 family. Zn(2+) serves as cofactor.

The protein resides in the secreted. It catalyses the reaction Preferential cleavage of bonds with hydrophobic residues in P1'. Also 3-Asn-|-Gln-4 and 8-Gly-|-Ser-9 bonds in insulin B chain.. Its function is as follows. Probable secreted metalloprotease that shows high activities on basic nuclear substrates such as histone and protamine. May be involved in virulence. This chain is Probable neutral protease 2 homolog MCYG_00239, found in Arthroderma otae (strain ATCC MYA-4605 / CBS 113480) (Microsporum canis).